The following is a 64-amino-acid chain: Translational regulator CsrA (64 aa).

Belongs to the CsrA/RsmA family. In terms of assembly, homodimer; the beta-strands of each monomer intercalate to form a hydrophobic core, while the alpha-helices form wings that extend away from the core.

The protein resides in the cytoplasm. Functionally, a key translational regulator that binds mRNA to regulate translation initiation and/or mRNA stability. Mediates global changes in gene expression, shifting from rapid growth to stress survival by linking envelope stress, the stringent response and the catabolite repression systems. Usually binds in the 5'-UTR; binding at or near the Shine-Dalgarno sequence prevents ribosome-binding, repressing translation, binding elsewhere in the 5'-UTR can activate translation and/or stabilize the mRNA. Its function is antagonized by small RNA(s). This is Translational regulator CsrA from Thioalkalivibrio sulfidiphilus (strain HL-EbGR7).